The following is a 94-amino-acid chain: Integration host factor subunit beta (94 aa).

The protein belongs to the bacterial histone-like protein family. As to quaternary structure, heterodimer of an alpha and a beta chain.

This protein is one of the two subunits of integration host factor, a specific DNA-binding protein that functions in genetic recombination as well as in transcriptional and translational control. The chain is Integration host factor subunit beta from Escherichia fergusonii (strain ATCC 35469 / DSM 13698 / CCUG 18766 / IAM 14443 / JCM 21226 / LMG 7866 / NBRC 102419 / NCTC 12128 / CDC 0568-73).